The chain runs to 834 residues: uncharacterized protein (834 aa).

Disordered regions lie at residues 1–38 (MGSL…KAQP), 166–280 (DLSS…TPQE), and 767–787 (ISRV…NFHP). 2 stretches are compositionally biased toward low complexity: residues 7–18 (SSKNNSSLGSIS) and 166–252 (DLSS…SSSS).

It belongs to the IIV-6 268L family.

This is an uncharacterized protein from Invertebrate iridescent virus 3 (IIV-3).